A 211-amino-acid polypeptide reads, in one-letter code: Protein-methionine-sulfoxide reductase heme-binding subunit MsrQ (211 aa).

4 helical membrane passes run 17–37 (LAGLLPFLWLVWAINHGGLGA), 82–102 (LWCFAWATLHLTSYALLELGV), 116–136 (PYLTLGIISWVILLALAFTST), and 153–173 (FVYLVAILAPIHYLWSVKIIS).

This sequence belongs to the MsrQ family. In terms of assembly, heterodimer of a catalytic subunit (MsrP) and a heme-binding subunit (MsrQ). FMN serves as cofactor. Heme b is required as a cofactor.

It localises to the cell inner membrane. Part of the MsrPQ system that repairs oxidized periplasmic proteins containing methionine sulfoxide residues (Met-O), using respiratory chain electrons. Thus protects these proteins from oxidative-stress damage caused by reactive species of oxygen and chlorine generated by the host defense mechanisms. MsrPQ is essential for the maintenance of envelope integrity under bleach stress, rescuing a wide series of structurally unrelated periplasmic proteins from methionine oxidation, including the primary periplasmic chaperone SurA and the lipoprotein Pal. MsrQ provides electrons for reduction to the reductase catalytic subunit MsrP, using the quinone pool of the respiratory chain. This Shigella boydii serotype 18 (strain CDC 3083-94 / BS512) protein is Protein-methionine-sulfoxide reductase heme-binding subunit MsrQ.